The following is a 155-amino-acid chain: Ribosome maturation factor RimP (155 aa).

The protein belongs to the RimP family.

The protein resides in the cytoplasm. Functionally, required for maturation of 30S ribosomal subunits. The chain is Ribosome maturation factor RimP from Synechococcus sp. (strain RCC307).